A 187-amino-acid polypeptide reads, in one-letter code: Large ribosomal subunit protein uL6 (187 aa).

Belongs to the universal ribosomal protein uL6 family. As to quaternary structure, part of the 50S ribosomal subunit.

Functionally, this protein binds to the 23S rRNA, and is important in its secondary structure. It is located near the subunit interface in the base of the L7/L12 stalk, and near the tRNA binding site of the peptidyltransferase center. The chain is Large ribosomal subunit protein uL6 from Chloroflexus aggregans (strain MD-66 / DSM 9485).